A 213-amino-acid chain; its full sequence is Protein-L-isoaspartate O-methyltransferase (213 aa).

S64 is a catalytic residue.

It belongs to the methyltransferase superfamily. L-isoaspartyl/D-aspartyl protein methyltransferase family.

It localises to the cytoplasm. It catalyses the reaction [protein]-L-isoaspartate + S-adenosyl-L-methionine = [protein]-L-isoaspartate alpha-methyl ester + S-adenosyl-L-homocysteine. Catalyzes the methyl esterification of L-isoaspartyl residues in peptides and proteins that result from spontaneous decomposition of normal L-aspartyl and L-asparaginyl residues. It plays a role in the repair and/or degradation of damaged proteins. This chain is Protein-L-isoaspartate O-methyltransferase, found in Flavobacterium psychrophilum (strain ATCC 49511 / DSM 21280 / CIP 103535 / JIP02/86).